The primary structure comprises 518 residues: GMP synthase [glutamine-hydrolyzing] (518 aa).

Residues 6-200 (RLLIIDFGSQ…FVRLAGFKGD (195 aa)) enclose the Glutamine amidotransferase type-1 domain. Catalysis depends on Cys-84, which acts as the Nucleophile. Active-site residues include His-175 and Glu-177. One can recognise a GMPS ATP-PPase domain in the interval 201-393 (WTMGAYREEA…LGLPESFIGR (193 aa)). 228–234 (SGGVDSS) is a binding site for ATP.

As to quaternary structure, homodimer.

It catalyses the reaction XMP + L-glutamine + ATP + H2O = GMP + L-glutamate + AMP + diphosphate + 2 H(+). Its pathway is purine metabolism; GMP biosynthesis; GMP from XMP (L-Gln route): step 1/1. In terms of biological role, catalyzes the synthesis of GMP from XMP. The sequence is that of GMP synthase [glutamine-hydrolyzing] from Cereibacter sphaeroides (strain ATCC 17023 / DSM 158 / JCM 6121 / CCUG 31486 / LMG 2827 / NBRC 12203 / NCIMB 8253 / ATH 2.4.1.) (Rhodobacter sphaeroides).